A 724-amino-acid polypeptide reads, in one-letter code: MEENQLTCLIVGETPAAQFLGWRLSLSNSFIILVSQYVSSDELVAWKSTKLGANFYTPNILTKDIKELHHKLKHNGANTYSIDIVLVSAISLQSFETTCRLLSDYTNDNTTVLISTDFGCELEPIAISYFGGKCKCVISISCEVECRQLSLGSYALVNDDQCVITLGLTYCDANFEASPTILENTKAASLELQGIKGSNVRRFLLGLTVAKWMKSKLILDPKQMALKMWELLIPKISLNILSIIYEQFDYEKMLENKSTEIIFKDLVKELLGICFAQCGSKIARFLLVKSQGEEEINFGKIVEYCKGKKLQLINSTANEHPEYLSLPFEPYCFYHRFEYPAQILLHQPIILAKKYGVSCSNLNFLYGFYTRLLTLSGLSINGGRCEHALSMLDSRIGGGINVASGINSGQDFTDGDNEDQDKGKNRVDKNVKEGSFISLTQRFTMTSPLGVNDPALPADLEKLYLGAEYISNCDANTSGGQKRVKSPTKADTGYDDKHLPDDTIHTFEDEYLADEDDFSCLGIDKRSSTKPTKPLEKFGVVAVPHFIRRFSIKRSSKDKSNDMKRPYTTSSLELQLRSNHFMFAKEYQDLHRQLYYEVKPRTQSELDARRRNYSELESQMWKIKHRFNIHRGALPRPRTNPYELLLDHIDVLNRGNTGDILRFTTSRYGGVDTYDSILRDQSTIMELLDKRCAYSPPVLFDNEAKERDHDRDCYQDYNHDHRSH.

Disordered stretches follow at residues 407-427 and 477-497; these read NSGQDFTDGDNEDQDKGKNRV and TSGGQKRVKSPTKADTGYDDK.

Its subcellular location is the cytoplasm. It localises to the prospore membrane. Its function is as follows. May be involved in a late step of spore wall assembly. The sequence is that of Outer spore wall protein 2 (OSW2) from Saccharomyces cerevisiae (strain ATCC 204508 / S288c) (Baker's yeast).